The sequence spans 107 residues: Putative nucleosome assembly protein 1-like 6 (107 aa).

The protein belongs to the nucleosome assembly protein (NAP) family.

The sequence is that of Putative nucleosome assembly protein 1-like 6 from Homo sapiens (Human).